A 475-amino-acid chain; its full sequence is Mitochondrial adenyl nucleotide antiporter SLC25A24 (475 aa).

A regulatory N-terminal domain region spans residues 1 to 173 (MLRWLRGFVL…RFWKHSTGID (173 aa)). Residues 1 to 197 (MLRWLRGFVL…ERKSGQWWRQ (197 aa)) lie on the Mitochondrial intermembrane side of the membrane. EF-hand domains are found at residues 19–54 (EPPT…LGIP), 55–88 (LGQD…KDHE), 86–121 (DHEK…LGLT), and 122–157 (ISEQ…NPVA). Ca(2+) is bound by residues Asp-32, Asn-34, Asp-36, Val-38, Glu-43, Asp-68, Asn-70, Asp-72, Lys-74, Glu-79, Asp-99, Asn-101, Asp-103, Lys-105, Glu-110, Asp-135, Asp-137, Thr-139, Thr-141, and Glu-146. Residues 159–168 (IEEIIRFWKH) form a linker region region. The segment at 174–475 (IGDSLTIPDE…MKQTLGVTQK (302 aa)) is C-terminal transmembrane transporter domain. 3 Solcar repeats span residues 192–276 (GQWW…YKKL), 284–369 (IGTF…LKSH), and 381–469 (PGVL…MKQT). Residues 198-215 (LLAGGIAGAVSRTSTAPL) form a helical membrane-spanning segment. Over 216 to 250 (DRLKVMMQVHGSKSMNIFGGFRQMIKEGGVRSLWR) the chain is Mitochondrial matrix. A helical membrane pass occupies residues 251–270 (GNGTNVIKIAPETAVKFWVY). Residues 271–293 (EQYKKLLTEEGQKIGTFERFISG) are Mitochondrial intermembrane-facing. Residues 294-307 (SMAGATAQTFIYPM) form a helical membrane-spanning segment. Topologically, residues 308 to 343 (EVMKTRLAVGKTGQYSGIYDCAKKILKYEGFGAFYK) are mitochondrial matrix. The residue at position 318 (Lys-318) is an N6-acetyllysine; alternate. Position 318 is an N6-succinyllysine; alternate (Lys-318). Position 334 is an N6-acetyllysine (Lys-334). Residues 344–363 (GYVPNLLGIIPYAGIDLAVY) form a helical membrane-spanning segment. Residues 364–386 (ELLKSHWLDNFAKDSVNPGVLVL) lie on the Mitochondrial intermembrane side of the membrane. Residues 387-404 (LGCGALSSTCGQLASYPL) traverse the membrane as a helical segment. At 405 to 443 (ALVRTRMQAQAMLEGAPQLNMVGLFRRIISKEGLPGLYR) the chain is on the mitochondrial matrix side. Lys-435 is modified (N6-acetyllysine; alternate). Lys-435 is modified (N6-succinyllysine; alternate). The helical transmembrane segment at 444 to 463 (GITPNFMKVLPAVGISYVVY) threads the bilayer. Over 464–475 (ENMKQTLGVTQK) the chain is Mitochondrial intermembrane.

This sequence belongs to the mitochondrial carrier (TC 2.A.29) family. In terms of assembly, monomer. In terms of tissue distribution, mainly expressed in colon. Also expressed in the small intestine proximal to the ileum. Weakly expressed in kidney but not in the liver.

The protein resides in the mitochondrion inner membrane. It localises to the peroxisome membrane. The catalysed reaction is Mg(2+)(out) + phosphate(in) + ATP(out) = Mg(2+)(in) + phosphate(out) + ATP(in). It catalyses the reaction ADP(out) + phosphate(in) + H(+)(out) = ADP(in) + phosphate(out) + H(+)(in). The enzyme catalyses AMP(out) + phosphate(in) = AMP(in) + phosphate(out). It carries out the reaction phosphate(in) + ATP(out) + 2 H(+)(out) = phosphate(out) + ATP(in) + 2 H(+)(in). The catalysed reaction is dADP(in) + ADP(out) = dADP(out) + ADP(in). It catalyses the reaction Mg(2+)(in) + ADP(out) + ATP(in) + H(+)(out) = Mg(2+)(out) + ADP(in) + ATP(out) + H(+)(in). The enzyme catalyses ADP(out) + diphosphate(in) = ADP(in) + diphosphate(out). It carries out the reaction dAMP(in) + ADP(out) + H(+)(out) = dAMP(out) + ADP(in) + H(+)(in). The catalysed reaction is 3'-AMP(in) + ADP(out) + H(+)(out) = 3'-AMP(out) + ADP(in) + H(+)(in). It catalyses the reaction dAMP(out) + phosphate(in) = dAMP(in) + phosphate(out). The enzyme catalyses 3'-AMP(out) + phosphate(in) = 3'-AMP(in) + phosphate(out). It carries out the reaction dADP(out) + phosphate(in) + H(+)(out) = dADP(in) + phosphate(out) + H(+)(in). Its activity is regulated as follows. Activated by an increase in cytosolic calcium levels that induce a conformational change of the N-terminal regulatory domain, uncapping the channel and allowing transport. Inhibited by bathophenanthroline, mersalyl, p-hydroxymercuribenzoate, bromcresol purple and tannic acid. Its function is as follows. Electroneutral antiporter that mediates the transport of adenyl nucleotides through the inner mitochondrial membrane. Originally identified as an ATP-magnesium/inorganic phosphate antiporter, it also acts as a broad specificity adenyl nucleotide antiporter. By regulating the mitochondrial matrix adenyl nucleotide pool could adapt to changing cellular energetic demands and indirectly regulate adenyl nucleotide-dependent metabolic pathways. In vitro, a low activity is also observed with guanyl and pyrimidine nucleotides. May play a role in protecting cells against oxidative stress-induced cell death, by buffering calcium levels in the mitochondrial matrix through the formation of calcium-phosphate precipitates. The sequence is that of Mitochondrial adenyl nucleotide antiporter SLC25A24 (SLC25A24) from Oryctolagus cuniculus (Rabbit).